Here is a 364-residue protein sequence, read N- to C-terminus: Oxidized polyvinyl alcohol hydrolase (364 aa).

The N-terminal stretch at 1 to 34 (MFKPVVKSRSSRSFCYLAGCLAMVAATLSSTAQA) is a signal peptide. Residues S190 and S293 each act as charge relay system in the active site.

Belongs to the peptidase S9A family. In terms of assembly, monomer.

The protein localises to the periplasm. It catalyses the reaction nonane-4,6-dione + H2O = pentan-2-one + butanoate + H(+). Catalyzes the hydrolysis of 4,6-nonanedione, a beta-diketone compound. Also mediates hydrolysis of oxidized polyvinyl alcohol (PVA) in the second step in the degradation of polyvinyl alcohol. Not active toward the monoketone structure. The polypeptide is Oxidized polyvinyl alcohol hydrolase (oph) (Sphingopyxis sp. (strain 113P3)).